The sequence spans 470 residues: 3-isopropylmalate dehydratase large subunit (470 aa).

Residues C351, C411, and C414 each contribute to the [4Fe-4S] cluster site.

It belongs to the aconitase/IPM isomerase family. LeuC type 1 subfamily. Heterodimer of LeuC and LeuD. [4Fe-4S] cluster is required as a cofactor.

The catalysed reaction is (2R,3S)-3-isopropylmalate = (2S)-2-isopropylmalate. It functions in the pathway amino-acid biosynthesis; L-leucine biosynthesis; L-leucine from 3-methyl-2-oxobutanoate: step 2/4. Catalyzes the isomerization between 2-isopropylmalate and 3-isopropylmalate, via the formation of 2-isopropylmaleate. The sequence is that of 3-isopropylmalate dehydratase large subunit from Rhodopseudomonas palustris (strain BisA53).